A 555-amino-acid chain; its full sequence is Glutamine--tRNA ligase (555 aa).

The 'HIGH' region motif lies at 34-44 (PEPNGYLHIGH). ATP is bound by residues 35 to 37 (EPN) and 41 to 47 (HIGHAKS). Positions 67 and 212 each coordinate L-glutamine. Residues T231, 261–262 (RL), and 269–271 (MSK) each bind ATP. Residues 268-272 (IMSKR) carry the 'KMSKS' region motif.

Belongs to the class-I aminoacyl-tRNA synthetase family. As to quaternary structure, monomer.

The protein localises to the cytoplasm. It carries out the reaction tRNA(Gln) + L-glutamine + ATP = L-glutaminyl-tRNA(Gln) + AMP + diphosphate. This is Glutamine--tRNA ligase from Yersinia pseudotuberculosis serotype O:1b (strain IP 31758).